A 714-amino-acid polypeptide reads, in one-letter code: DNA ligase (714 aa).

Residues 59 to 63 (DYEYD), 108 to 109 (SL), and glutamate 139 each bind NAD(+). The active-site N6-AMP-lysine intermediate is lysine 141. The NAD(+) site is built by arginine 162, glutamate 200, lysine 325, and lysine 349. Positions 443, 446, 461, and 466 each coordinate Zn(2+). The BRCT domain occupies 624–713 (VVENIFEGKT…IPDDLKDKVH (90 aa)).

It belongs to the NAD-dependent DNA ligase family. LigA subfamily. Requires Mg(2+) as cofactor. It depends on Mn(2+) as a cofactor.

The enzyme catalyses NAD(+) + (deoxyribonucleotide)n-3'-hydroxyl + 5'-phospho-(deoxyribonucleotide)m = (deoxyribonucleotide)n+m + AMP + beta-nicotinamide D-nucleotide.. Its function is as follows. DNA ligase that catalyzes the formation of phosphodiester linkages between 5'-phosphoryl and 3'-hydroxyl groups in double-stranded DNA using NAD as a coenzyme and as the energy source for the reaction. It is essential for DNA replication and repair of damaged DNA. This Persephonella marina (strain DSM 14350 / EX-H1) protein is DNA ligase.